Here is a 1565-residue protein sequence, read N- to C-terminus: Synemin (1565 aa).

Residues Met1–Pro10 are head. Residues Glu11–Arg49 are coil 1A. Residues Glu11 to Asn320 form an interaction with DMD and UTRN region. An IF rod domain is found at Glu11–Glu322. Positions Glu50 to Ala58 are linker 1. The tract at residues Arg59–Thr163 is coil 1B. The linker 12 stretch occupies residues Met164–Ser186. The coil 2 stretch occupies residues Tyr187–Val300. The tail stretch occupies residues Lys301–Phe1565. The tract at residues Ser401–Ser421 is disordered. A compositionally biased stretch (polar residues) spans Gly402–Ser421. Residue Ser429 is modified to Phosphoserine. The tract at residues Tyr472–Arg609 is disordered. Residues Lys498–Val577 are compositionally biased toward basic and acidic residues. 2 positions are modified to phosphothreonine: Thr598 and Thr651. 2 positions are modified to phosphoserine: Ser653 and Ser777. Basic and acidic residues predominate over residues Leu1019–Ser1040. A disordered region spans residues Leu1019–Ala1060. Residues Ser1044, Ser1049, Ser1077, Ser1087, Ser1181, and Ser1184 each carry the phosphoserine modification. The interval Ser1080 to Val1105 is disordered. A compositionally biased stretch (polar residues) spans Ser1087–Val1105. Residues Val1152–Gln1463 form an interaction with TLN1 and VCL region. Disordered stretches follow at residues Glu1198–Ser1221 and Gln1332–Glu1415. Positions Gly1244–His1563 are interaction with DMD and UTRN. A compositionally biased stretch (polar residues) spans Ala1354–Ser1379. Ser1435 is subject to Phosphoserine. The residue at position 1487 (Arg1487) is an Omega-N-methylarginine. The segment at Phe1505 to Met1525 is disordered. Basic and acidic residues predominate over residues Asp1513–Met1525.

Belongs to the intermediate filament family. Interacts with GFAP and VIM. Isoform 1 interacts with TLN1 and VCL. Isoform 2 interacts with DES and DTNA. Isoform 1 and isoform 2 interact with DMD and UTRN. As to expression, isoform 2 is strongly detected in adult heart, fetal skeletal muscles and fetal heart. Isoform 1 is weakly detected in fetal heart and also in fetal skeletal muscle. Isoform 1 and isoform 2 are detected in adult bladder (at protein level). The mRNA is predominantly expressed in heart and muscle with some expression in brain which may be due to tissue-specific isoforms.

Its subcellular location is the cytoplasm. It localises to the cytoskeleton. The protein resides in the cell junction. The protein localises to the adherens junction. Functionally, type-VI intermediate filament (IF) which plays an important cytoskeletal role within the muscle cell cytoskeleton. It forms heteromeric IFs with desmin and/or vimentin, and via its interaction with cytoskeletal proteins alpha-dystrobrevin, dystrophin, talin-1, utrophin and vinculin, is able to link these heteromeric IFs to adherens-type junctions, such as to the costameres, neuromuscular junctions, and myotendinous junctions within striated muscle cells. This chain is Synemin, found in Homo sapiens (Human).